The chain runs to 229 residues: Flagellar L-ring protein (229 aa).

The signal sequence occupies residues methionine 1–glycine 20. Cysteine 21 carries N-palmitoyl cysteine lipidation. Residue cysteine 21 is the site of S-diacylglycerol cysteine attachment.

This sequence belongs to the FlgH family. In terms of assembly, the basal body constitutes a major portion of the flagellar organelle and consists of four rings (L,P,S, and M) mounted on a central rod.

It localises to the cell outer membrane. The protein localises to the bacterial flagellum basal body. Its function is as follows. Assembles around the rod to form the L-ring and probably protects the motor/basal body from shearing forces during rotation. The sequence is that of Flagellar L-ring protein from Bordetella pertussis (strain Tohama I / ATCC BAA-589 / NCTC 13251).